A 162-amino-acid chain; its full sequence is Anaerobic nitrite reductase NSHB2 (162 aa).

Residues serine 16–lysine 159 form the Globin domain. Positions glutamate 49 to serine 53 match the Homodimerization motif. 6 residues coordinate heme b: serine 59, lysine 73, histidine 77, arginine 100, threonine 104, and histidine 105. The short motif at aspartate 112–glutamate 124 is the Homodimerization element.

The protein belongs to the plant globin family. Homodimer. Requires heme b as cofactor. As to expression, mainly expressed in germinating seeds, seedlings, roots, flowers and leaves.

The protein localises to the cytoplasm. Its subcellular location is the nucleus. It carries out the reaction Fe(III)-heme b-[protein] + nitric oxide + H2O = Fe(II)-heme b-[protein] + nitrite + 2 H(+). Its function is as follows. Phytoglobin that reduces nitrite to nitric oxide under anoxic conditions (e.g. during flooding or in waterlogged soil). May not function as an oxygen storage or transport protein. Has an unusually high affinity for O(2) through an hexacoordinate heme iron because of a very low dissociation constant. Promotes tolerance to low potassium K(+) conditions. The polypeptide is Anaerobic nitrite reductase NSHB2 (Oryza sativa subsp. indica (Rice)).